A 330-amino-acid polypeptide reads, in one-letter code: Probable WRKY transcription factor 39 (330 aa).

A DNA-binding region (WRKY) is located at residues 256–322 (KIADIPPDEY…YEGEHNHSRI (67 aa)).

It localises to the nucleus. In terms of biological role, transcription factor. Interacts specifically with the W box (5'-(T)TGAC[CT]-3'), a frequently occurring elicitor-responsive cis-acting element. The chain is Probable WRKY transcription factor 39 (WRKY39) from Arabidopsis thaliana (Mouse-ear cress).